A 686-amino-acid polypeptide reads, in one-letter code: DNA topoisomerase 1 (686 aa).

In terms of domain architecture, Toprim spans 1 to 141 (MILIIAEKPN…KRMKFSALTK (141 aa)). Glu7 and Asp107 together coordinate Mg(2+). The Topo IA-type catalytic domain maps to 156–574 (NFGMANAGIA…EAKERLTKIL (419 aa)). Residues 196–201 (STGRVQ) are interaction with DNA. The O-(5'-phospho-DNA)-tyrosine intermediate role is filled by Tyr317. The C4-type 1 zinc finger occupies 606–634 (CPKCGGDLIVKYNKKTGKRFVGCSNWPKC). The segment at 653 to 678 (CCNGAPVVIIREEDGREFEICLDINC) adopts a C4-type 2; atypical zinc-finger fold.

Belongs to the type IA topoisomerase family. In terms of assembly, monomer. The cofactor is Mg(2+).

It catalyses the reaction ATP-independent breakage of single-stranded DNA, followed by passage and rejoining.. Functionally, releases the supercoiling and torsional tension of DNA, which is introduced during the DNA replication and transcription, by transiently cleaving and rejoining one strand of the DNA duplex. Introduces a single-strand break via transesterification at a target site in duplex DNA. The scissile phosphodiester is attacked by the catalytic tyrosine of the enzyme, resulting in the formation of a DNA-(5'-phosphotyrosyl)-enzyme intermediate and the expulsion of a 3'-OH DNA strand. The free DNA strand then undergoes passage around the unbroken strand, thus removing DNA supercoils. Finally, in the religation step, the DNA 3'-OH attacks the covalent intermediate to expel the active-site tyrosine and restore the DNA phosphodiester backbone. This is DNA topoisomerase 1 from Pyrococcus horikoshii (strain ATCC 700860 / DSM 12428 / JCM 9974 / NBRC 100139 / OT-3).